Reading from the N-terminus, the 287-residue chain is Myogenin (287 aa).

Phosphoserine; by CaMK2G is present on residues Ser-77 and Ser-79. The 52-residue stretch at 81–132 (DRRRAATLREKRRLKKVNEAFEALKRSTLLNPNQRLPKVEILRSAIQYIERL) folds into the bHLH domain. The residue at position 87 (Thr-87) is a Phosphothreonine; by CaMK2G.

As to quaternary structure, homodimer and heterodimer with E12; heterodimerization enhances MYOG DNA-binding and transcriptional activities. Interacts with SMARCA4/BRG1/BAF190A. Interacts (via C-terminal region) with SSRP1 and SUPT16H; the interaction is indicative of an interaction with the FACT complex. Interacts with CSRP3. In terms of processing, phosphorylated by CAMK2G on threonine and serine amino acids in a muscle activity-dependent manner. Phosphorylation of Thr-87 impairs both DNA-binding and trans-activation functions in contracting muscles. As to expression, expressed in muscle (at protein level).

Its subcellular location is the nucleus. Functionally, acts as a transcriptional activator that promotes transcription of muscle-specific target genes and plays a role in muscle differentiation, cell cycle exit and muscle atrophy. Essential for the development of functional embryonic skeletal fiber muscle differentiation. However is dispensable for postnatal skeletal muscle growth; phosphorylation by CAMK2G inhibits its transcriptional activity in respons to muscle activity. Required for the recruitment of the FACT complex to muscle-specific promoter regions, thus promoting gene expression initiation. During terminal myoblast differentiation, plays a role as a strong activator of transcription at loci with an open chromatin structure previously initiated by MYOD1. Together with MYF5 and MYOD1, co-occupies muscle-specific gene promoter core regions during myogenesis. Also cooperates with myocyte-specific enhancer factor MEF2D and BRG1-dependent recruitment of SWI/SNF chromatin-remodeling enzymes to alter chromatin structure at myogenic late gene promoters. Facilitates cell cycle exit during terminal muscle differentiation through the up-regulation of miR-20a expression, which in turn represses genes involved in cell cycle progression. Binds to the E-box containing (E1) promoter region of the miR-20a gene. Also plays a role in preventing reversal of muscle cell differentiation. Contributes to the atrophy-related gene expression in adult denervated muscles. Induces fibroblasts to differentiate into myoblasts. The protein is Myogenin (Myog) of Rattus norvegicus (Rat).